A 371-amino-acid chain; its full sequence is Carnitine monooxygenase oxygenase subunit (371 aa).

Positions 44–152 (WICVAHGSEL…VEEYAGFVFI (109 aa)) constitute a Rieske domain. Positions 86, 88, 106, and 109 each coordinate [2Fe-2S] cluster. Residues histidine 208, histidine 213, and aspartate 323 each contribute to the Fe cation site.

The protein belongs to the bacterial ring-hydroxylating dioxygenase alpha subunit family. CntA subfamily. In terms of assembly, composed of an oxygenase subunit and a reductase subunit. The cofactor is [2Fe-2S] cluster. Fe cation is required as a cofactor.

It catalyses the reaction (R)-carnitine + NADH + O2 + H(+) = (3R)-3-hydroxy-4-oxobutanoate + trimethylamine + NAD(+) + H2O. The catalysed reaction is (R)-carnitine + NADPH + O2 + H(+) = (3R)-3-hydroxy-4-oxobutanoate + trimethylamine + NADP(+) + H2O. It participates in amine and polyamine metabolism; carnitine metabolism. Its activity is regulated as follows. Inhibited by EDTA. Functionally, converts carnitine to trimethylamine and malic semialdehyde. Acts on both enantiomers. This is Carnitine monooxygenase oxygenase subunit from Acinetobacter pittii (strain PHEA-2).